We begin with the raw amino-acid sequence, 352 residues long: Heat-inducible transcription repressor HrcA (352 aa).

The protein belongs to the HrcA family.

In terms of biological role, negative regulator of class I heat shock genes (grpE-dnaK-dnaJ and groELS operons). Prevents heat-shock induction of these operons. The polypeptide is Heat-inducible transcription repressor HrcA (Chlorobium phaeobacteroides (strain BS1)).